A 187-amino-acid polypeptide reads, in one-letter code: ATP synthase subunit b, chloroplastic (187 aa).

Residues 34–56 form a helical membrane-spanning segment; that stretch reads LINLAAVIGLLFYSGRSFLTNLL.

It belongs to the ATPase B chain family. In terms of assembly, F-type ATPases have 2 components, F(1) - the catalytic core - and F(0) - the membrane proton channel. F(1) has five subunits: alpha(3), beta(3), gamma(1), delta(1), epsilon(1). F(0) has four main subunits: a(1), b(1), b'(1) and c(10-14). The alpha and beta chains form an alternating ring which encloses part of the gamma chain. F(1) is attached to F(0) by a central stalk formed by the gamma and epsilon chains, while a peripheral stalk is formed by the delta, b and b' chains.

The protein localises to the plastid. It is found in the chloroplast thylakoid membrane. In terms of biological role, f(1)F(0) ATP synthase produces ATP from ADP in the presence of a proton or sodium gradient. F-type ATPases consist of two structural domains, F(1) containing the extramembraneous catalytic core and F(0) containing the membrane proton channel, linked together by a central stalk and a peripheral stalk. During catalysis, ATP synthesis in the catalytic domain of F(1) is coupled via a rotary mechanism of the central stalk subunits to proton translocation. Functionally, component of the F(0) channel, it forms part of the peripheral stalk, linking F(1) to F(0). The protein is ATP synthase subunit b, chloroplastic of Chlorokybus atmophyticus (Soil alga).